Here is an 80-residue protein sequence, read N- to C-terminus: MRALRVSQALVRSFSSTARNRLENRVAEKQKIFQADNDLPVHLKGGATDNILYRVTMTLCLGGTVYSLYCLGWASFPHKK.

The transit peptide at 1–21 directs the protein to the mitochondrion; it reads MRALRVSQALVRSFSSTARNR. Topologically, residues 22-46 are mitochondrial matrix; it reads LENRVAEKQKIFQADNDLPVHLKGG. Residues 47–75 traverse the membrane as a helical segment; the sequence is ATDNILYRVTMTLCLGGTVYSLYCLGWAS. Over 76–80 the chain is Mitochondrial intermembrane; that stretch reads FPHKK.

Belongs to the cytochrome c oxidase VIIa family. In terms of assembly, component of the complex IV (CIV, cytochrome c oxidase), a multisubunit enzyme composed of 14 subunits. The complex is composed of a catalytic core of 3 subunits MT-CO1, MT-CO2 and MT-CO3, encoded in the mitochondrial DNA, and 11 supernumerary subunits COX4I1 (or COX4I2), COX5A, COX5B, COX6A2 (or COX6A1), COX6B1 (or COX6B2), COX6C, COX7A1 (or COX7A2), COX7B, COX7C, COX8B and NDUFA4, which are encoded in the nuclear genome. The complex exists as a monomer or a dimer and forms supercomplexes (SCs) in the inner mitochondrial membrane with NADH-ubiquinone oxidoreductase (complex I, CI) and ubiquinol-cytochrome c oxidoreductase (cytochrome b-c1 complex, complex III, CIII), resulting in different assemblies (supercomplex SCI(1)III(2)IV(1) and megacomplex MCI(2)III(2)IV(2)).

It is found in the mitochondrion inner membrane. Its pathway is energy metabolism; oxidative phosphorylation. Functionally, component of the mitochondrial respiratory complex IV (CIV, also named cytochrome c oxidase complex), the last enzyme in the mitochondrial electron transport chain which drives oxidative phosphorylation. The CIV complex is the component of the respiratory chain that catalyzes the reduction of oxygen to water. Acts as an assembly factor that specifically drives the homodimerization of CIV complexes, mediating the formation of mitochondrial respiratory supercomplexes (respirasomes) containing two CIV: supercomplxes with two molecules of CIV show improved activity. Despite being highly expressed in brown adipose tissue, not required for thermogenesis. The chain is Cytochrome c oxidase subunit 7A1, mitochondrial (COX7A1) from Sus scrofa (Pig).